Reading from the N-terminus, the 351-residue chain is Methionine import ATP-binding protein MetN (351 aa).

The ABC transporter domain maps to 4 to 249 (VQLDHVSVTF…PKAELTQKFV (246 aa)). 41 to 48 (GFSGAGKS) lines the ATP pocket.

It belongs to the ABC transporter superfamily. Methionine importer (TC 3.A.1.24) family. The complex is composed of two ATP-binding proteins (MetN), two transmembrane proteins (MetI) and a solute-binding protein (MetQ).

It localises to the cell membrane. The enzyme catalyses L-methionine(out) + ATP + H2O = L-methionine(in) + ADP + phosphate + H(+). It carries out the reaction D-methionine(out) + ATP + H2O = D-methionine(in) + ADP + phosphate + H(+). Its function is as follows. Part of the ABC transporter complex MetNIQ involved in methionine import. Responsible for energy coupling to the transport system. The polypeptide is Methionine import ATP-binding protein MetN (Lactobacillus delbrueckii subsp. bulgaricus (strain ATCC BAA-365 / Lb-18)).